A 691-amino-acid chain; its full sequence is Elongation factor G (691 aa).

Residues 8–282 (ERVRNIGIAA…AVIDYLPAPI (275 aa)) form the tr-type G domain. GTP is bound by residues 17 to 24 (AHIDAGKT), 81 to 85 (DTPGH), and 135 to 138 (NKMD).

This sequence belongs to the TRAFAC class translation factor GTPase superfamily. Classic translation factor GTPase family. EF-G/EF-2 subfamily.

It localises to the cytoplasm. Its function is as follows. Catalyzes the GTP-dependent ribosomal translocation step during translation elongation. During this step, the ribosome changes from the pre-translocational (PRE) to the post-translocational (POST) state as the newly formed A-site-bound peptidyl-tRNA and P-site-bound deacylated tRNA move to the P and E sites, respectively. Catalyzes the coordinated movement of the two tRNA molecules, the mRNA and conformational changes in the ribosome. This Prochlorococcus marinus (strain SARG / CCMP1375 / SS120) protein is Elongation factor G.